The sequence spans 75 residues: UPF0352 protein YejL (75 aa).

The protein belongs to the UPF0352 family.

This is UPF0352 protein YejL from Salmonella arizonae (strain ATCC BAA-731 / CDC346-86 / RSK2980).